A 271-amino-acid chain; its full sequence is Insulin-like growth factor-binding protein 5 (271 aa).

An N-terminal signal peptide occupies residues 1–19 (MVLTAVLLLLAACAGPAQG). Residues 22 to 102 (SFVHCEPCDE…LHGRGVCLNE (81 aa)) form the IGFBP N-terminal domain. Cystine bridges form between Cys-26-Cys-52, Cys-29-Cys-54, Cys-37-Cys-55, Cys-44-Cys-58, Cys-66-Cys-79, and Cys-73-Cys-99. Residues 109–121 (AKIERDSREHEEP) are compositionally biased toward basic and acidic residues. The tract at residues 109-129 (AKIERDSREHEEPTTSEMAEE) is disordered. The residue at position 115 (Ser-115) is a Phosphoserine. Residues 188 to 262 (QGPCRRHMEA…MEYVDGDFQC (75 aa)) enclose the Thyroglobulin type-1 domain. Intrachain disulfides connect Cys-191/Cys-218, Cys-229/Cys-240, and Cys-242/Cys-262.

In terms of assembly, interacts with IGF1; this interaction enhances the growth stimulatory effects of IGF1 on fibroblasts. Interacts with CAV1; this interaction allows trafficking of IGFBP5 from the plasma membrane to the nucleus. Interacts with NCL; this interaction is necessary for IGFBP5 localization to the nucleus.

The protein localises to the secreted. Its subcellular location is the cytoplasm. The protein resides in the nucleus. In terms of biological role, multifunctional protein that plays a critical role in regulating the availability of IGFs to their receptors and thereby regulates IGF-mediated cellular processes including proliferation, differentiation, and apoptosis in a cell-type specific manner. Increases the cell proliferation of osteoblasts, intestinal smooth muscle cells and neuroblastoma cells. Enhances adhesion and survival of epithelial cells but decreases adhesion of mesenchymal cells. Once secreted, acts as a major mediator of mTORC1-dependent feedback inhibition of IGF1 signaling. Also plays a role in the induction of extracellular matrix (ECM) production and deposition independently of its nuclear translocation and binding to IGFs. Acts itself as a growth factor that can act independently of IGFs to regulate bone formation. Acts as a ligand for the ROR1 receptor which triggers formation of ROR1/HER2 heterodimer to enhance CREB oncogenic signaling. The sequence is that of Insulin-like growth factor-binding protein 5 (IGFBP5) from Sus scrofa (Pig).